The following is a 539-amino-acid chain: Chaperonin GroEL (539 aa).

ATP contacts are provided by residues 29–32 (TLGP), 86–90 (DGTTT), glycine 413, 476–478 (NAA), and aspartate 492.

This sequence belongs to the chaperonin (HSP60) family. As to quaternary structure, forms a cylinder of 14 subunits composed of two heptameric rings stacked back-to-back. Interacts with the co-chaperonin GroES.

The protein resides in the cytoplasm. The catalysed reaction is ATP + H2O + a folded polypeptide = ADP + phosphate + an unfolded polypeptide.. Together with its co-chaperonin GroES, plays an essential role in assisting protein folding. The GroEL-GroES system forms a nano-cage that allows encapsulation of the non-native substrate proteins and provides a physical environment optimized to promote and accelerate protein folding. This chain is Chaperonin GroEL, found in Parageobacillus thermoglucosidasius (Geobacillus thermoglucosidasius).